A 358-amino-acid chain; its full sequence is 3-dehydroquinate synthase (358 aa).

NAD(+) contacts are provided by residues 69–74, 103–107, 127–128, K140, K149, and 167–170; these read DGEAHK, GVIGD, TT, and CLRT. Residues E182, H245, and H262 each contribute to the Zn(2+) site.

This sequence belongs to the sugar phosphate cyclases superfamily. Dehydroquinate synthase family. Co(2+) is required as a cofactor. Requires Zn(2+) as cofactor. It depends on NAD(+) as a cofactor.

Its subcellular location is the cytoplasm. The enzyme catalyses 7-phospho-2-dehydro-3-deoxy-D-arabino-heptonate = 3-dehydroquinate + phosphate. It functions in the pathway metabolic intermediate biosynthesis; chorismate biosynthesis; chorismate from D-erythrose 4-phosphate and phosphoenolpyruvate: step 2/7. Its function is as follows. Catalyzes the conversion of 3-deoxy-D-arabino-heptulosonate 7-phosphate (DAHP) to dehydroquinate (DHQ). The protein is 3-dehydroquinate synthase of Tolumonas auensis (strain DSM 9187 / NBRC 110442 / TA 4).